Consider the following 99-residue polypeptide: Large ribosomal subunit protein bL27 (99 aa).

Residues 1–9 constitute a propeptide that is removed on maturation; sequence MLLMNLQLF.

The protein belongs to the bacterial ribosomal protein bL27 family. In terms of processing, the N-terminus is cleaved by ribosomal processing cysteine protease Prp.

In Clostridium novyi (strain NT), this protein is Large ribosomal subunit protein bL27.